The chain runs to 225 residues: Protein E26 (225 aa).

In terms of assembly, interacts with proteins IE0 and IE1. Interacts with protein FP25K. Interacts with host importin alpha-16. Palmitoylated.

The protein localises to the host nucleus inner membrane. The protein resides in the virion. Its subcellular location is the host cytoplasm. It localises to the host nucleus. Functionally, plays a role in the sorting of ODV envelope proteins to the host inner nuclear membrane. May facilitate the fusion and release of nucleocapsids into the cytoplasm. Modulates the expression levels of IE0 and IE1. The polypeptide is Protein E26 (DA26) (Lepidoptera (butterflies and moths)).